The primary structure comprises 1427 residues: Protein expanded (1427 aa).

Residues 26–399 form the FERM domain; that stretch reads RFLALRLLGQ…DTHQWSMKLA (374 aa). The tract at residues 176-212 is disordered; that stretch reads GDAPPGTSNSKDDSGEETSASPSNGGRGLSATTTLPK. Polar residues predominate over residues 192–211; sequence ETSASPSNGGRGLSATTTLP. 2 positions are modified to phosphotyrosine: Tyr227 and Tyr423. Disordered stretches follow at residues 520 to 566 and 611 to 656; these read VRPQ…IGSQ and NSAL…SGVY. A compositionally biased stretch (polar residues) spans 524–544; it reads DASSNGATIVTNSSVQRNSMG. Over residues 545-559 the composition is skewed to low complexity; sequence TTANDSSTATDSPSS. Tyr679 is modified (phosphotyrosine). Positions 688 to 710 are enriched in basic and acidic residues; that stretch reads EETHVQHSDSVDGKKKEDFRPRS. Disordered regions lie at residues 688 to 732, 766 to 792, 815 to 880, 939 to 963, and 1000 to 1022; these read EETH…DNKH, YVTLPLGDQGEEEVDQPPAPPPPYSAR, APKP…SLKS, HNSNYAGGSQASLHHHHVPSHHRHS, and LAPPPPSLPRQPPPPPPPNHPHL. Phosphotyrosine is present on Tyr766. The segment covering 818–838 has biased composition (pro residues); that stretch reads PDSPPCSPPVPPAPIPAPPPA. The RXPPXY motif signature appears at 842–847; the sequence is RDPPPY. Over residues 848–859 the composition is skewed to polar residues; it reads SISSKPRPTSLI. The segment covering 860–877 has biased composition (low complexity); that stretch reads SVSSSAHPAPSAAGSMSS. A compositionally biased stretch (basic residues) spans 951 to 963; the sequence is LHHHHVPSHHRHS. Over residues 1001–1019 the composition is skewed to pro residues; sequence APPPPSLPRQPPPPPPPNH. The SH3-binding motif lies at 1008–1020; sequence PRQPPPPPPPNHP. At Tyr1103 the chain carries Phosphotyrosine. Positions 1149-1157 match the SH3-binding motif; it reads PPPPPPLHP. Residue Ser1181 is modified to Phosphoserine. Disordered regions lie at residues 1190–1267 and 1345–1398; these read DLLP…WAGE and TGQE…LPVQ. Pro residues-rich tracts occupy residues 1214-1230 and 1237-1246; these read PPMPAPSEKPPPIPSKP and PIPPRKPPTL. Polar residues-rich tracts occupy residues 1253–1262 and 1345–1370; these read SPLTKTSSGA and TGQEMPTSSAQPSGATTNGVANSSAG. Over residues 1376–1388 the composition is skewed to basic residues; sequence KARKGSTVSHRHP.

As to quaternary structure, forms a complex with Kibra and Mer. Interacts (via RXPPXY motif) with Kibra (via domain WW 1). Interacts with Mer and Hpo (via SARAH domain). Interacts with Schip1; the interaction results in recruitment of Schip1 to the apical cell membrane. Interacts with ack and yki. Post-translationally, phosphorylated by Ack at several tyrosines including Tyr-227, Tyr-423, Tyr-679, Tyr-766 and Tyr-1103.

The protein localises to the apical cell membrane. Functionally, activates the Hippo/SWH (Sav/Wts/Hpo) signaling pathway, a signaling pathway that plays a pivotal role in organ size control and tumor suppression by restricting proliferation and promoting apoptosis. The core of this pathway is composed of a kinase cascade wherein Hippo (Hpo), in complex with its regulatory protein Salvador (Sav), phosphorylates and activates Warts (Wts) in complex with its regulatory protein Mats, which in turn phosphorylates and inactivates the Yorkie (Yki) oncoprotein. Ex acts synergistically along with Mer and Kibra to regulate the Hippo signaling pathway. Involved in the control of cell proliferation in imaginal disks. May bind to certain proteins of signal transduction pathways by interaction with their SH3 domains. Required for apical localization of Schip1. The protein is Protein expanded (ex) of Drosophila melanogaster (Fruit fly).